The sequence spans 500 residues: Cytochrome P450 726A27 (500 aa).

Residues 7–27 (IPSYPIIFSFFIFIFMLIKIW) form a helical; Signal-anchor for type II membrane protein membrane-spanning segment. Heme is bound at residue C440.

Belongs to the cytochrome P450 family. Heme serves as cofactor. Expressed in mature seeds.

The protein resides in the membrane. The enzyme catalyses (-)-casbene + reduced [NADPH--hemoprotein reductase] + O2 = 4-hydroxycasbene + oxidized [NADPH--hemoprotein reductase] + H2O + H(+). The catalysed reaction is 8-hydroxycasbene + reduced [NADPH--hemoprotein reductase] + O2 = 4,8-dihydroxycasbene + oxidized [NADPH--hemoprotein reductase] + H2O + H(+). It catalyses the reaction 4,8-dihydroxycasbene + reduced [NADPH--hemoprotein reductase] + O2 = 4,5,8-trihydroxycasbene + oxidized [NADPH--hemoprotein reductase] + H2O + H(+). Its pathway is secondary metabolite biosynthesis; terpenoid biosynthesis. Involved in the biosynthesis of macrocyclic lathyrane type diterpenoids (also called Euphorbia factors) natural products, including the cyclization route from casbene to jolkinol C, a precursor for ingenol mebutate that is used to treat actinic keratosis, a precancerous skin condition. Catalyzes the hydroxylation of (-)-casbene and 8-hydroxycasbene to produce 4-hydroxycasbene and 4,8-dihydroxycasbene, respectively. This Euphorbia lathyris (Caper spurge) protein is Cytochrome P450 726A27.